The primary structure comprises 297 residues: Tyrosine recombinase XerC (297 aa).

Positions 1 to 84 (MEEIQVTFLN…TLRTFYEFWM (84 aa)) constitute a Core-binding (CB) domain. The 182-residue stretch at 105 to 286 (YLPQFFYEEE…SNQQLRKVYL (182 aa)) folds into the Tyr recombinase domain. Catalysis depends on residues Arg-145, Lys-169, His-238, Arg-241, and His-264. Tyr-273 serves as the catalytic O-(3'-phospho-DNA)-tyrosine intermediate.

It belongs to the 'phage' integrase family. XerC subfamily. Forms a cyclic heterotetrameric complex composed of two molecules of XerC and two molecules of XerD.

The protein localises to the cytoplasm. In terms of biological role, site-specific tyrosine recombinase, which acts by catalyzing the cutting and rejoining of the recombining DNA molecules. The XerC-XerD complex is essential to convert dimers of the bacterial chromosome into monomers to permit their segregation at cell division. It also contributes to the segregational stability of plasmids. In Staphylococcus haemolyticus (strain JCSC1435), this protein is Tyrosine recombinase XerC.